The following is a 554-amino-acid chain: Transcription factor 7-like 1-A (554 aa).

The segment covering 1–11 has biased composition (gly residues); the sequence is MPQLNSGGGDE. The interaction with CTNNB1-A stretch occupies residues 1-61; the sequence is MPQLNSGGGD…SENHSSDSDS (61 aa). Disordered regions lie at residues 1–73, 183–213, and 391–475; these read MPQL…REAF, GTPP…PYYP, and WSAR…LTTK. 2 stretches are compositionally biased toward basic and acidic residues: residues 17-32 and 52-73; these read ELIR…EKSP and SENH…REAF. The tract at residues 109–312 is interaction with AES and TLE4-A; sequence LGGHYLPNGA…SPNLHTKSNM (204 aa). The HMG box DNA-binding region spans 324-392; it reads IKKPLNAFML…LHSQLYPSWS (69 aa). The span at 407-416 shows a compositional bias: basic and acidic residues; that stretch reads KQSPEMETHT. Residues 408 to 554 form an interaction with CTBP-B region; sequence QSPEMETHTK…PLSLVTKSSD (147 aa). Residues 445–464 are compositionally biased toward low complexity; that stretch reads SPATPSAALASPAAPAATHS. Over residues 465–474 the composition is skewed to polar residues; that stretch reads EQAQPLSLTT.

This sequence belongs to the TCF/LEF family. In terms of assembly, interacts with csnk1e, ctnnb1-A, ctbp-B, dact1-A and gsk3b. May interact with ase and tle4-A. Post-translationally, phosphorylated. Phosphorylation by csnk1e promotes binding to ctnnb1-A while phosphorylation by gsk3b may reverse this effect.

Its subcellular location is the cytoplasm. It is found in the nucleus. Its function is as follows. Participates in the Wnt signaling pathway. Binds to DNA and acts as a repressor in the absence of ctnnb1-A and possibly ctnnb1-B, and as an activator in the presence of these proteins. Required early in development for the establishment of the dorsal body axis in response to maternal Wnt signaling. Also required during development of the CNS for the establishment of dorsal-ventral patterning in the prospective diencephalon. The protein is Transcription factor 7-like 1-A (tcf7l1-a) of Xenopus laevis (African clawed frog).